Consider the following 100-residue polypeptide: Urease subunit gamma (100 aa).

This sequence belongs to the urease gamma subunit family. As to quaternary structure, heterotrimer of UreA (gamma), UreB (beta) and UreC (alpha) subunits. Three heterotrimers associate to form the active enzyme.

The protein localises to the cytoplasm. It carries out the reaction urea + 2 H2O + H(+) = hydrogencarbonate + 2 NH4(+). The protein operates within nitrogen metabolism; urea degradation; CO(2) and NH(3) from urea (urease route): step 1/1. In Staphylococcus saprophyticus subsp. saprophyticus (strain ATCC 15305 / DSM 20229 / NCIMB 8711 / NCTC 7292 / S-41), this protein is Urease subunit gamma.